An 872-amino-acid chain; its full sequence is Protein translocase subunit SecA (872 aa).

ATP is bound by residues Gln87, 105 to 109 (GEGKT), and Asp500. Residues Cys855, Cys857, Cys866, and His867 each contribute to the Zn(2+) site.

Belongs to the SecA family. Monomer and homodimer. Part of the essential Sec protein translocation apparatus which comprises SecA, SecYEG and auxiliary proteins SecDF-YajC and YidC. Zn(2+) is required as a cofactor.

The protein resides in the cell inner membrane. It is found in the cytoplasm. It carries out the reaction ATP + H2O + cellular proteinSide 1 = ADP + phosphate + cellular proteinSide 2.. Its function is as follows. Part of the Sec protein translocase complex. Interacts with the SecYEG preprotein conducting channel. Has a central role in coupling the hydrolysis of ATP to the transfer of proteins into and across the cell membrane, serving both as a receptor for the preprotein-SecB complex and as an ATP-driven molecular motor driving the stepwise translocation of polypeptide chains across the membrane. This Anaplasma marginale (strain St. Maries) protein is Protein translocase subunit SecA.